Here is a 115-residue protein sequence, read N- to C-terminus: Large ribosomal subunit protein bL19 (115 aa).

It belongs to the bacterial ribosomal protein bL19 family.

This protein is located at the 30S-50S ribosomal subunit interface and may play a role in the structure and function of the aminoacyl-tRNA binding site. The sequence is that of Large ribosomal subunit protein bL19 from Streptococcus pyogenes serotype M2 (strain MGAS10270).